Here is a 552-residue protein sequence, read N- to C-terminus: Non-structural protein NS1 (552 aa).

It belongs to the orbivirus non-structural protein NS1 family.

The sequence is that of Non-structural protein NS1 (Segment-5) from Bluetongue virus 13 (isolate USA) (BTV 13).